A 190-amino-acid polypeptide reads, in one-letter code: PBP1-interacting protein LSM12 (190 aa).

Residues 2 to 69 (PVCNNDSQLI…IKEVTALRDN (68 aa)) form the Sm domain. The AD domain maps to 84-190 (PSMQAARDRS…ERVQKTLSKK (107 aa)).

Belongs to the LSM12 family. As to quaternary structure, forms a complex composed of at least MKT1, PBP1, XAC1 and LSM12. Forms a complex composed of at least MKT1L, PBP1, XAC1 and LSM12. Within the complex, interacts with PBP1; the interaction is direct.

Involved in post-transcriptional regulation of gene expression. The polypeptide is PBP1-interacting protein LSM12 (Trypanosoma brucei brucei (strain 927/4 GUTat10.1)).